Consider the following 870-residue polypeptide: DNA mismatch repair protein MutS (870 aa).

Residue Gly617 to Ser624 coordinates ATP.

The protein belongs to the DNA mismatch repair MutS family.

This protein is involved in the repair of mismatches in DNA. It is possible that it carries out the mismatch recognition step. This protein has a weak ATPase activity. The sequence is that of DNA mismatch repair protein MutS from Phocaeicola vulgatus (strain ATCC 8482 / DSM 1447 / JCM 5826 / CCUG 4940 / NBRC 14291 / NCTC 11154) (Bacteroides vulgatus).